The sequence spans 599 residues: MTTQVPPSALLPLNPEQLARLQAATTDLTPTQLAWVSGYFWGVLNQQPAALAATPAPAAEMPGITIISASQTGNARRVAEALRDDLLAAKLNVKLVNAGDYKFKQIASEKLLIVVTSTQGEGEPPEEAVALHKFLFSKKAPKLENTAFAVFSLGDSSYEFFCQSGKDFDSKLAELGGERLLDRVDADVEYQAAASEWRARVVDALKSRAPVAAPSQSVATGAVNEIHTSPYSKDAPLVASLSVNQKITGRNSEKDVRHIEIDLGDSGLRYQPGDALGVWYQNDPALVKELVELLWLKGDEPVTVEGKTLPLNEALQWHFELTVNTANIVENYATLTRSETLLPLVGDKAKLQHYAATTPIVDMVRFSPAQLDAEALINLLRPLTPRLYSIASSQAEVENEVHVTVGVVRYDVEGRARAGGASSFLADRVEEEGEVRVFIEHNDNFRLPANPETPVIMIGPGTGIAPFRAFMQQRAADEAPGKNWLFFGNPHFTEDFLYQVEWQRYVKDGVLTRIDLAWSRDQKEKVYVQDKLREQGAELWRWINDGAHIYVCGDANRMAKDVEQALLEVIAEFGGMDIEAADEFLSELRVERRYQRDVY.

A Flavodoxin-like domain is found at 64–202 (ITIISASQTG…AASEWRARVV (139 aa)). FMN-binding positions include 70–75 (SQTGNA), 117–120 (STQG), and 153–162 (LGDSSYEFFC). Positions 234–448 (DAPLVASLSV…IEHNDNFRLP (215 aa)) constitute an FAD-binding FR-type domain. FAD is bound by residues T322, A356, 386–389 (RLYS), 404–406 (TVG), Y410, and 419–422 (GGAS). NADP(+)-binding positions include 519–520 (SR), 525–529 (KVYVQ), and D561. Y599 contacts FAD.

The protein belongs to the NADPH-dependent sulphite reductase flavoprotein subunit CysJ family. In the N-terminal section; belongs to the flavodoxin family. This sequence in the C-terminal section; belongs to the flavoprotein pyridine nucleotide cytochrome reductase family. In terms of assembly, alpha(8)-beta(8). The alpha component is a flavoprotein, the beta component is a hemoprotein. Requires FAD as cofactor. FMN serves as cofactor.

The enzyme catalyses hydrogen sulfide + 3 NADP(+) + 3 H2O = sulfite + 3 NADPH + 4 H(+). It functions in the pathway sulfur metabolism; hydrogen sulfide biosynthesis; hydrogen sulfide from sulfite (NADPH route): step 1/1. Functionally, component of the sulfite reductase complex that catalyzes the 6-electron reduction of sulfite to sulfide. This is one of several activities required for the biosynthesis of L-cysteine from sulfate. The flavoprotein component catalyzes the electron flow from NADPH -&gt; FAD -&gt; FMN to the hemoprotein component. The sequence is that of Sulfite reductase [NADPH] flavoprotein alpha-component from Shigella boydii serotype 4 (strain Sb227).